Consider the following 167-residue polypeptide: NADPH-dependent 7-cyano-7-deazaguanine reductase (167 aa).

The tract at residues 1-24 (MTTRSQDQTRDLKVLGTGRLTSPE) is disordered. The active-site Thioimide intermediate is Cys57. The active-site Proton donor is Asp64. Substrate is bound by residues 79-81 (VES) and 98-99 (ME).

Belongs to the GTP cyclohydrolase I family. QueF type 1 subfamily.

The protein localises to the cytoplasm. The catalysed reaction is 7-aminomethyl-7-carbaguanine + 2 NADP(+) = 7-cyano-7-deazaguanine + 2 NADPH + 3 H(+). It participates in tRNA modification; tRNA-queuosine biosynthesis. In terms of biological role, catalyzes the NADPH-dependent reduction of 7-cyano-7-deazaguanine (preQ0) to 7-aminomethyl-7-deazaguanine (preQ1). This chain is NADPH-dependent 7-cyano-7-deazaguanine reductase, found in Desulfovibrio desulfuricans (strain ATCC 27774 / DSM 6949 / MB).